The primary structure comprises 296 residues: Nucleotide-binding protein SPJ_1472 (296 aa).

13–20 (GMSGAGKT) lines the ATP pocket. 63–66 (DMRS) contributes to the GTP binding site.

This sequence belongs to the RapZ-like family.

Functionally, displays ATPase and GTPase activities. The chain is Nucleotide-binding protein SPJ_1472 from Streptococcus pneumoniae (strain JJA).